The sequence spans 181 residues: Epidermin decarboxylase (181 aa).

H67 is a catalytic residue.

Belongs to the HFCD (homooligomeric flavin containing Cys decarboxylase) superfamily. Homododecamer. FMN is required as a cofactor.

Catalyzes the removal of two reducing equivalents (oxidative decarboxylation) from the cysteine residue of the C-terminal meso-lanthionine of epidermin to form a --C==C-- double bond. This chain is Epidermin decarboxylase (epiD), found in Staphylococcus epidermidis.